The chain runs to 153 residues: Transcriptional repressor NrdR 2 (153 aa).

A zinc finger lies at 3-34 (CPFCGQDDTQVKDSRPTDDNAAIRRRRACPGC). The ATP-cone domain occupies 49–139 (LVVVKKDGSR…VYRNFREAKD (91 aa)).

Belongs to the NrdR family. Requires Zn(2+) as cofactor.

In terms of biological role, negatively regulates transcription of bacterial ribonucleotide reductase nrd genes and operons by binding to NrdR-boxes. The polypeptide is Transcriptional repressor NrdR 2 (Paramagnetospirillum magneticum (strain ATCC 700264 / AMB-1) (Magnetospirillum magneticum)).